Reading from the N-terminus, the 516-residue chain is Glycosyl hydrolase family 109 protein 4 (516 aa).

The signal sequence occupies residues 1-18 (MKKIKLLLVAGACVVLSA). Residue Cys19 is the site of N-palmitoyl cysteine attachment. Cys19 carries the S-diacylglycerol cysteine lipid modification. Residues 76–77 (MR), Asp98, 146–149 (WLHH), 166–167 (EV), and Asn195 each bind NAD(+). Substrate is bound by residues Tyr224, Arg247, 259 to 262 (YATH), and Tyr337. Tyr259 contributes to the NAD(+) binding site.

This sequence belongs to the Gfo/Idh/MocA family. Glycosyl hydrolase 109 subfamily. The cofactor is NAD(+).

Its subcellular location is the cell membrane. Its function is as follows. Glycosidase. This chain is Glycosyl hydrolase family 109 protein 4, found in Phocaeicola vulgatus (strain ATCC 8482 / DSM 1447 / JCM 5826 / CCUG 4940 / NBRC 14291 / NCTC 11154) (Bacteroides vulgatus).